The following is a 211-amino-acid chain: Peroxiredoxin (211 aa).

Residues 2–156 (PLLGDDFPEL…ILRAVKVLQI (155 aa)) enclose the Thioredoxin domain. C44 acts as the Cysteine sulfenic acid (-SOH) intermediate in catalysis. R119 lines the substrate pocket. An intrachain disulfide couples C199 to C205.

Belongs to the peroxiredoxin family. Prx6 subfamily. As to quaternary structure, homodecamer. Pentamer of dimers that assemble into a ring structure.

It is found in the cytoplasm. The enzyme catalyses a hydroperoxide + [thioredoxin]-dithiol = an alcohol + [thioredoxin]-disulfide + H2O. Functionally, thiol-specific peroxidase that catalyzes the reduction of hydrogen peroxide and organic hydroperoxides to water and alcohols, respectively. Plays a role in cell protection against oxidative stress by detoxifying peroxides. This is Peroxiredoxin from Chlorobaculum tepidum (strain ATCC 49652 / DSM 12025 / NBRC 103806 / TLS) (Chlorobium tepidum).